Here is a 1139-residue protein sequence, read N- to C-terminus: uncharacterized protein (1139 aa).

The protein belongs to the IIV-6 295L family.

This is an uncharacterized protein from Aedes vexans (Inland floodwater mosquito).